Consider the following 295-residue polypeptide: Phosphate transport system permease protein PstA (295 aa).

6 consecutive transmembrane segments (helical) span residues 29–49, 88–108, 126–146, 149–169, 198–218, and 266–286; these read IALVLSMATMLFGLFWLIWIL, LLILWATVIGTPLGIMAGIYL, DILLSAPSIVVGLFVYTIVVA, EHFSGWAGVIALALLQVPIVI, ISAITLKASVSGILTGILLAI, and NLAWAGVLLITLCVLLLNILA. Positions 83 to 286 constitute an ABC transmembrane type-1 domain; the sequence is IAGSGLLILW…LCVLLLNILA (204 aa).

Belongs to the binding-protein-dependent transport system permease family. CysTW subfamily.

Its subcellular location is the cell inner membrane. Part of a binding-protein-dependent transport system for phosphate; probably responsible for the translocation of the substrate across the membrane. The chain is Phosphate transport system permease protein PstA (pstA) from Yersinia pestis.